The primary structure comprises 149 residues: Transcription antitermination protein NusB (149 aa).

The protein belongs to the NusB family.

Its function is as follows. Involved in transcription antitermination. Required for transcription of ribosomal RNA (rRNA) genes. Binds specifically to the boxA antiterminator sequence of the ribosomal RNA (rrn) operons. The sequence is that of Transcription antitermination protein NusB from Acinetobacter baylyi (strain ATCC 33305 / BD413 / ADP1).